The primary structure comprises 445 residues: MAAPEERDLTQEQTEKLLQFQDLTGIESMDQCRHTLEQHNWNIEAAVQDRLNEQEGVPSVFNPPPSRPLQVNTADHRIYSYVVSRPQPRGLLGWGYYLIMLPFRFTYYTILDIFRFALRFIRPDPRSRVTDPVGDIVSFMHSFEEKYGRAHPVFYQGTYSQALNDAKRELRFLLVYLHGDDHQDSDEFCRNTLCAPEVISLINTRMLFWACSTNKPEGYRVSQALRENTYPFLAMIMLKDRRMTVVGRLEGLIQPDDLINQLTFIMDANQTYLVSERLEREERNQTQVLRQQQDEAYLASLRADQEKERKKREERERKRRKEEEVQQQKLAEERRRQNLQEEKERKLECLPPEPSPDDPESVKIIFKLPNDSRVERRFHFSQSLTVIHDFLFSLKESPEKFQIEANFPRRVLPCIPSEEWPNPPTLQEAGLSHTEVLFVQDLTDE.

Ala2 carries the post-translational modification N-acetylalanine. Residues 12 to 48 (EQTEKLLQFQDLTGIESMDQCRHTLEQHNWNIEAAVQ) form the UBA domain. Lys167 carries the N6-acetyllysine modification. Positions 275 to 350 (SERLEREERN…EEKERKLECL (76 aa)) form a coiled coil. A disordered region spans residues 299–361 (ASLRADQEKE…PEPSPDDPES (63 aa)). Basic and acidic residues predominate over residues 303–348 (ADQEKERKKREERERKRRKEEEVQQQKLAEERRRQNLQEEKERKLE). Residues 357–439 (DDPESVKIIF…GLSHTEVLFV (83 aa)) form the UBX domain.

As to quaternary structure, identified in a complex that contains SEL1L, OS9, FAF2/UBXD8, UBE2J1/UBC6E and AUP1. Interacts with YOD1. Interacts (via N-terminus) with UBQLN2 (via C-terminus). Interacts with PNPLA2 and UBAC2. Interacts with ZFAND2B; probably through VCP. Interacts with LMBR1L. As to expression, broadly expressed, with highest levels in brain.

It is found in the cytoplasm. It localises to the lipid droplet. Its subcellular location is the endoplasmic reticulum. Functionally, plays an important role in endoplasmic reticulum-associated degradation (ERAD) that mediates ubiquitin-dependent degradation of misfolded endoplasmic reticulum proteins. By controlling the steady-state expression of the IGF1R receptor, indirectly regulates the insulin-like growth factor receptor signaling pathway. Involved in inhibition of lipid droplet degradation by binding to phospholipase PNPL2 and inhibiting its activity by promoting dissociation of PNPL2 from its endogenous activator, ABHD5 which inhibits the rate of triacylglycerol hydrolysis. Involved in stress granule disassembly: associates with ubiquitinated G3BP1 in response to heat shock, thereby promoting interaction between ubiquitinated G3BP1 and VCP, followed by G3BP1 extraction from stress granules and stress granule disassembly. The sequence is that of FAS-associated factor 2 from Homo sapiens (Human).